Here is a 488-residue protein sequence, read N- to C-terminus: 3-octaprenyl-4-hydroxybenzoate carboxy-lyase (488 aa).

Asn-172 lines the Mn(2+) pocket. Residues 175–177 (IYR), 189–191 (RWL), and 194–195 (RG) contribute to the prenylated FMN site. Glu-238 is a binding site for Mn(2+). The Proton donor role is filled by Asp-287.

The protein belongs to the UbiD family. As to quaternary structure, homohexamer. Requires prenylated FMN as cofactor. Mn(2+) is required as a cofactor.

It is found in the cell membrane. The catalysed reaction is a 4-hydroxy-3-(all-trans-polyprenyl)benzoate + H(+) = a 2-(all-trans-polyprenyl)phenol + CO2. It functions in the pathway cofactor biosynthesis; ubiquinone biosynthesis. Functionally, catalyzes the decarboxylation of 3-octaprenyl-4-hydroxy benzoate to 2-octaprenylphenol, an intermediate step in ubiquinone biosynthesis. This Pseudomonas putida (strain ATCC 47054 / DSM 6125 / CFBP 8728 / NCIMB 11950 / KT2440) protein is 3-octaprenyl-4-hydroxybenzoate carboxy-lyase.